The following is a 316-amino-acid chain: 4-hydroxy-3-methylbut-2-enyl diphosphate reductase (316 aa).

Position 12 (cysteine 12) interacts with [4Fe-4S] cluster. (2E)-4-hydroxy-3-methylbut-2-enyl diphosphate is bound by residues histidine 41 and histidine 74. Histidine 41 and histidine 74 together coordinate dimethylallyl diphosphate. Positions 41 and 74 each coordinate isopentenyl diphosphate. [4Fe-4S] cluster is bound at residue cysteine 96. Residue histidine 124 coordinates (2E)-4-hydroxy-3-methylbut-2-enyl diphosphate. Histidine 124 contributes to the dimethylallyl diphosphate binding site. Histidine 124 is an isopentenyl diphosphate binding site. Glutamate 126 acts as the Proton donor in catalysis. Threonine 167 provides a ligand contact to (2E)-4-hydroxy-3-methylbut-2-enyl diphosphate. Residue cysteine 197 coordinates [4Fe-4S] cluster. (2E)-4-hydroxy-3-methylbut-2-enyl diphosphate is bound by residues serine 225, serine 226, asparagine 227, and serine 269. 4 residues coordinate dimethylallyl diphosphate: serine 225, serine 226, asparagine 227, and serine 269. Isopentenyl diphosphate contacts are provided by serine 225, serine 226, asparagine 227, and serine 269.

The protein belongs to the IspH family. Homodimer. [4Fe-4S] cluster serves as cofactor.

The enzyme catalyses isopentenyl diphosphate + 2 oxidized [2Fe-2S]-[ferredoxin] + H2O = (2E)-4-hydroxy-3-methylbut-2-enyl diphosphate + 2 reduced [2Fe-2S]-[ferredoxin] + 2 H(+). The catalysed reaction is dimethylallyl diphosphate + 2 oxidized [2Fe-2S]-[ferredoxin] + H2O = (2E)-4-hydroxy-3-methylbut-2-enyl diphosphate + 2 reduced [2Fe-2S]-[ferredoxin] + 2 H(+). Its pathway is isoprenoid biosynthesis; dimethylallyl diphosphate biosynthesis; dimethylallyl diphosphate from (2E)-4-hydroxy-3-methylbutenyl diphosphate: step 1/1. It functions in the pathway isoprenoid biosynthesis; isopentenyl diphosphate biosynthesis via DXP pathway; isopentenyl diphosphate from 1-deoxy-D-xylulose 5-phosphate: step 6/6. Catalyzes the conversion of 1-hydroxy-2-methyl-2-(E)-butenyl 4-diphosphate (HMBPP) into a mixture of isopentenyl diphosphate (IPP) and dimethylallyl diphosphate (DMAPP). Acts in the terminal step of the DOXP/MEP pathway for isoprenoid precursor biosynthesis. The chain is 4-hydroxy-3-methylbut-2-enyl diphosphate reductase from Escherichia coli O6:H1 (strain CFT073 / ATCC 700928 / UPEC).